Consider the following 156-residue polypeptide: Small ribosomal subunit protein uS7 (156 aa).

The protein belongs to the universal ribosomal protein uS7 family. Part of the 30S ribosomal subunit. Contacts proteins S9 and S11.

Its function is as follows. One of the primary rRNA binding proteins, it binds directly to 16S rRNA where it nucleates assembly of the head domain of the 30S subunit. Is located at the subunit interface close to the decoding center, probably blocks exit of the E-site tRNA. In Geobacillus kaustophilus (strain HTA426), this protein is Small ribosomal subunit protein uS7.